The following is an 850-amino-acid chain: Pentatricopeptide repeat-containing protein At5g16860 (850 aa).

PPR repeat units follow at residues 58-88 (TLNLTSHLISTYISVGCLSHAVSLLRRFPPS), 91-125 (GVYHWNSLIRSYGDNGCANKCLYLFGLMHSLSWTP), 126-160 (DNYTFPFVFKACGEISSVRCGESAHALSLVTGFIS), 161-191 (NVFVGNALVAMYSRCRSLSDARKVFDEMSVW), 192-227 (DVVSWNSIIESYAKLGKPKVALEMFSRMTNEFGCRP), 228-262 (DNITLVNVLPPCASLGTHSLGKQLHCFAVTSEMIQ), 263-293 (NMFVGNCLVDMYAKCGMMDEANTVFSNMSVK), 294-328 (DVVSWNAMVAGYSQIGRFEDAVRLFEKMQEEKIKM), 329-363 (DVVTWSAAISGYAQRGLGYEALGVCRQMLSSGIKP), 364-398 (NEVTLISVLSGCASVGALMHGKEIHCYAIKYPIDL), 406-436 (ENMVINQLIDMYAKCKKVDTARAMFDSLSPK), 439-473 (DVVTWTVMIGGYSQHGDANKALELLSEMFEEDCQT), 476-510 (NAFTISCALVACASLAALRIGKQIHAYALRNQQNA), 512-542 (PLFVSNCLIDMYAKCGSISDARLVFDNMMAK), 543-577 (NEVTWTSLMTGYGMHGYGEEALGIFDEMRRIGFKL), 578-608 (DGVTLLVVLYACSHSGMIDQGMEYFNRMKTV), and 614-644 (GPEHYACLVDLLGRAGRLNAALRLIEEMPME). The segment at 649–724 (VWVAFLSCCR…RPGCSWVEGI (76 aa)) is type E motif. The segment at 725-755 (KGTTTFFVGDKTHPHAKEIYQVLLDHMQRIK) is type E(+) motif. The interval 756 to 850 (DIGYVPETGF…NGSCSCKGYW (95 aa)) is type DYW motif.

Belongs to the PPR family. PCMP-H subfamily.

The protein is Pentatricopeptide repeat-containing protein At5g16860 (PCMP-H92) of Arabidopsis thaliana (Mouse-ear cress).